The primary structure comprises 338 residues: tRNA N6-adenosine threonylcarbamoyltransferase (338 aa).

His109 and His113 together coordinate Fe cation. Substrate-binding positions include 132 to 136 (AISGA), Asp165, Gly178, and Asn277. Fe cation is bound at residue Asp302.

It belongs to the KAE1 / TsaD family. It depends on Fe(2+) as a cofactor.

Its subcellular location is the cytoplasm. The enzyme catalyses L-threonylcarbamoyladenylate + adenosine(37) in tRNA = N(6)-L-threonylcarbamoyladenosine(37) in tRNA + AMP + H(+). Functionally, required for the formation of a threonylcarbamoyl group on adenosine at position 37 (t(6)A37) in tRNAs that read codons beginning with adenine. Is involved in the transfer of the threonylcarbamoyl moiety of threonylcarbamoyl-AMP (TC-AMP) to the N6 group of A37, together with TsaE and TsaB. TsaD likely plays a direct catalytic role in this reaction. The polypeptide is tRNA N6-adenosine threonylcarbamoyltransferase (Chlamydia trachomatis serovar A (strain ATCC VR-571B / DSM 19440 / HAR-13)).